A 98-amino-acid polypeptide reads, in one-letter code: NADH-ubiquinone oxidoreductase chain 4L (98 aa).

3 consecutive transmembrane segments (helical) span residues 1–21 (MTLI…GLLM), 29–49 (ALLC…LTIL), and 61–81 (IILL…LVMV).

It belongs to the complex I subunit 4L family. Core subunit of respiratory chain NADH dehydrogenase (Complex I) which is composed of 45 different subunits.

It is found in the mitochondrion inner membrane. It carries out the reaction a ubiquinone + NADH + 5 H(+)(in) = a ubiquinol + NAD(+) + 4 H(+)(out). Core subunit of the mitochondrial membrane respiratory chain NADH dehydrogenase (Complex I) which catalyzes electron transfer from NADH through the respiratory chain, using ubiquinone as an electron acceptor. Part of the enzyme membrane arm which is embedded in the lipid bilayer and involved in proton translocation. The chain is NADH-ubiquinone oxidoreductase chain 4L (MT-ND4L) from Balaenoptera omurai (Omura's baleen whale).